A 718-amino-acid chain; its full sequence is Catalase-peroxidase (718 aa).

Positions 98–219 form a cross-link, tryptophyl-tyrosyl-methioninium (Trp-Tyr) (with M-245); sequence WHAAGTYRMG…LAATEMGLIY (122 aa). The active-site Proton acceptor is H99. Residues 219 to 245 constitute a cross-link (tryptophyl-tyrosyl-methioninium (Tyr-Met) (with W-98)); that stretch reads YVNPEGPQASGDPRSAAPFIRATFGNM. H260 lines the heme b pocket.

This sequence belongs to the peroxidase family. Peroxidase/catalase subfamily. As to quaternary structure, homodimer or homotetramer. Requires heme b as cofactor. In terms of processing, formation of the three residue Trp-Tyr-Met cross-link is important for the catalase, but not the peroxidase activity of the enzyme.

It catalyses the reaction H2O2 + AH2 = A + 2 H2O. The enzyme catalyses 2 H2O2 = O2 + 2 H2O. Its function is as follows. Bifunctional enzyme with both catalase and broad-spectrum peroxidase activity. The sequence is that of Catalase-peroxidase from Acinetobacter baumannii (strain ATCC 17978 / DSM 105126 / CIP 53.77 / LMG 1025 / NCDC KC755 / 5377).